A 445-amino-acid polypeptide reads, in one-letter code: 3-phosphoshikimate 1-carboxyvinyltransferase (445 aa).

A disordered region spans residues 1 to 25 (MTDSNQPTPLQARKSGALHGTARVP). 3 residues coordinate 3-phosphoshikimate: Lys28, Ser29, and Arg33. Phosphoenolpyruvate is bound at residue Lys28. Phosphoenolpyruvate is bound by residues Gly101 and Arg129. Positions 175, 177, 328, and 355 each coordinate 3-phosphoshikimate. Phosphoenolpyruvate is bound at residue Gln177. The Proton acceptor role is filled by Asp328. Phosphoenolpyruvate contacts are provided by Arg359 and Arg402.

The protein belongs to the EPSP synthase family. In terms of assembly, monomer.

The protein localises to the cytoplasm. It catalyses the reaction 3-phosphoshikimate + phosphoenolpyruvate = 5-O-(1-carboxyvinyl)-3-phosphoshikimate + phosphate. It participates in metabolic intermediate biosynthesis; chorismate biosynthesis; chorismate from D-erythrose 4-phosphate and phosphoenolpyruvate: step 6/7. Catalyzes the transfer of the enolpyruvyl moiety of phosphoenolpyruvate (PEP) to the 5-hydroxyl of shikimate-3-phosphate (S3P) to produce enolpyruvyl shikimate-3-phosphate and inorganic phosphate. This is 3-phosphoshikimate 1-carboxyvinyltransferase from Rhodopseudomonas palustris (strain TIE-1).